Here is a 180-residue protein sequence, read N- to C-terminus: uncharacterized protein (180 aa).

Residues 45-180 (FVFSQVRTLD…GNRCAFWYAN (136 aa)) form the N-acetyltransferase domain.

Belongs to the acetyltransferase family. Ycf52 subfamily.

This is an uncharacterized protein from Prochlorococcus marinus (strain SARG / CCMP1375 / SS120).